The sequence spans 277 residues: Energy-coupling factor transporter ATP-binding protein EcfA1 (277 aa).

Positions 4–238 (IETKNLNYSY…SELLSKNDLK (235 aa)) constitute an ABC transporter domain. 38–45 (GKNGSGKS) is a binding site for ATP.

It belongs to the ABC transporter superfamily. Energy-coupling factor EcfA family. In terms of assembly, forms a stable energy-coupling factor (ECF) transporter complex composed of 2 membrane-embedded substrate-binding proteins (S component), 2 ATP-binding proteins (A component) and 2 transmembrane proteins (T component).

The protein resides in the cell membrane. Functionally, ATP-binding (A) component of a common energy-coupling factor (ECF) ABC-transporter complex. Unlike classic ABC transporters this ECF transporter provides the energy necessary to transport a number of different substrates. In Oenococcus oeni (strain ATCC BAA-331 / PSU-1), this protein is Energy-coupling factor transporter ATP-binding protein EcfA1.